We begin with the raw amino-acid sequence, 50 residues long: Large ribosomal subunit protein bL33 (50 aa).

This sequence belongs to the bacterial ribosomal protein bL33 family.

In Solibacter usitatus (strain Ellin6076), this protein is Large ribosomal subunit protein bL33.